The sequence spans 345 residues: S-adenosylmethionine:tRNA ribosyltransferase-isomerase (345 aa).

It belongs to the QueA family. As to quaternary structure, monomer.

The protein resides in the cytoplasm. It carries out the reaction 7-aminomethyl-7-carbaguanosine(34) in tRNA + S-adenosyl-L-methionine = epoxyqueuosine(34) in tRNA + adenine + L-methionine + 2 H(+). It functions in the pathway tRNA modification; tRNA-queuosine biosynthesis. Functionally, transfers and isomerizes the ribose moiety from AdoMet to the 7-aminomethyl group of 7-deazaguanine (preQ1-tRNA) to give epoxyqueuosine (oQ-tRNA). The chain is S-adenosylmethionine:tRNA ribosyltransferase-isomerase from Helicobacter pylori (strain HPAG1).